We begin with the raw amino-acid sequence, 156 residues long: Transcription elongation factor GreA (156 aa).

The stretch at 46 to 66 forms a coiled coil; it reads AEYHAAREKQSFVEGRIKELE.

The protein belongs to the GreA/GreB family.

Functionally, necessary for efficient RNA polymerase transcription elongation past template-encoded arresting sites. The arresting sites in DNA have the property of trapping a certain fraction of elongating RNA polymerases that pass through, resulting in locked ternary complexes. Cleavage of the nascent transcript by cleavage factors such as GreA or GreB allows the resumption of elongation from the new 3'terminus. GreA releases sequences of 2 to 3 nucleotides. In Paracoccus denitrificans (strain Pd 1222), this protein is Transcription elongation factor GreA.